We begin with the raw amino-acid sequence, 142 residues long: Large ribosomal subunit protein uL13 (142 aa).

This sequence belongs to the universal ribosomal protein uL13 family. As to quaternary structure, part of the 50S ribosomal subunit.

Its function is as follows. This protein is one of the early assembly proteins of the 50S ribosomal subunit, although it is not seen to bind rRNA by itself. It is important during the early stages of 50S assembly. This is Large ribosomal subunit protein uL13 from Pseudomonas fluorescens (strain ATCC BAA-477 / NRRL B-23932 / Pf-5).